The sequence spans 414 residues: Serine hydroxymethyltransferase (414 aa).

Residues Leu121 and 125–127 (GHL) contribute to the (6S)-5,6,7,8-tetrahydrofolate site. Position 229 is an N6-(pyridoxal phosphate)lysine (Lys229).

This sequence belongs to the SHMT family. In terms of assembly, homodimer. Requires pyridoxal 5'-phosphate as cofactor.

The protein localises to the cytoplasm. The catalysed reaction is (6R)-5,10-methylene-5,6,7,8-tetrahydrofolate + glycine + H2O = (6S)-5,6,7,8-tetrahydrofolate + L-serine. It participates in one-carbon metabolism; tetrahydrofolate interconversion. Its pathway is amino-acid biosynthesis; glycine biosynthesis; glycine from L-serine: step 1/1. Catalyzes the reversible interconversion of serine and glycine with tetrahydrofolate (THF) serving as the one-carbon carrier. This reaction serves as the major source of one-carbon groups required for the biosynthesis of purines, thymidylate, methionine, and other important biomolecules. Also exhibits THF-independent aldolase activity toward beta-hydroxyamino acids, producing glycine and aldehydes, via a retro-aldol mechanism. The polypeptide is Serine hydroxymethyltransferase (Janthinobacterium sp. (strain Marseille) (Minibacterium massiliensis)).